The following is a 322-amino-acid chain: Carnosine N-methyltransferase 2 (322 aa).

Glutamate 58 is a substrate binding site. Glycine 90, glutamate 119, serine 150, and isoleucine 172 together coordinate S-adenosyl-L-methionine. Residue asparagine 313 coordinates substrate.

This sequence belongs to the class I-like SAM-binding methyltransferase superfamily. HNMT family. As to quaternary structure, monomer.

It carries out the reaction carnosine + S-adenosyl-L-methionine = anserine + S-adenosyl-L-homocysteine + H(+). N-methyltransferase that mediates the formation of anserine (beta-alanyl-N(Pi)-methyl-L-histidine) from carnosine. Anserine, a methylated derivative of carnosine (beta-alanyl-L-histidine), is an abundant constituent of vertebrate skeletal muscles. The sequence is that of Carnosine N-methyltransferase 2 from Gallus gallus (Chicken).